The following is a 461-amino-acid chain: Steroidogenic factor 1 (461 aa).

The segment at residues 10 to 85 is a DNA-binding region (nuclear receptor); the sequence is DELCPVCGDK…VGMRLEAVRA (76 aa). Residues 13–33 form an NR C4-type zinc finger; that stretch reads CPVCGDKVSGYHYGLLTCESC. Lys34, Lys38, and Lys72 each carry N6-acetyllysine. The NR C4-type zinc-finger motif lies at 49-73; that stretch reads CTESQSCKIDKTLRKRCPFCRFQKC. A Glycyl lysine isopeptide (Lys-Gly) (interchain with G-Cter in SUMO) cross-link involves residue Lys119. The disordered stretch occupies residues 119–153; that stretch reads KLETGPPMGVPPPPPPPPDYMLPPGLHVPEPKGLA. The span at 126 to 139 shows a compositional bias: pro residues; sequence MGVPPPPPPPPDYM. A Glycyl lysine isopeptide (Lys-Gly) (interchain with G-Cter in SUMO) cross-link involves residue Lys194. Residue Ser203 is modified to Phosphoserine; by CDK7. An NR LBD domain is found at 222–459; that stretch reads GVPELILQLL…NLLIEMLQAK (238 aa). A 1,2-diacyl-sn-glycero-3-phosphocholine contacts are provided by Gly341, Tyr436, and Lys440.

It belongs to the nuclear hormone receptor family. NR5 subfamily. As to quaternary structure, binds DNA as a monomer. Part of a complex consisting of SFPQ, NONO and NR5A1. Interacts with NR0B2. Interacts with DGKQ and CDK7. Binds to and activated by HIPK3. Acetylation stimulates the transcriptional activity. In terms of processing, sumoylation reduces CDK7-mediated phosphorylation on Ser-203. Post-translationally, phosphorylated on Ser-203 by CDK7. This phosphorylation promotes transcriptional activity.

Its subcellular location is the nucleus. Transcriptional activator. Seems to be essential for sexual differentiation and formation of the primary steroidogenic tissues. Binds to the Ad4 site found in the promoter region of steroidogenic P450 genes such as CYP11A, CYP11B and CYP21B. Also regulates the AMH/Muellerian inhibiting substance gene as well as the AHCH and STAR genes. 5'-YCAAGGYC-3' and 5'-RRAGGTCA-3' are the consensus sequences for the recognition by NR5A1. The SFPQ-NONO-NR5A1 complex binds to the CYP17 promoter and regulates basal and cAMP-dependent transcriptional activity. Binds phospholipids with a phosphatidylinositol (PI) headgroup, in particular PI(3,4)P2 and PI(3,4,5)P3. Activated by the phosphorylation of NR5A1 by HIPK3 leading to increased steroidogenic gene expression upon cAMP signaling pathway stimulation. The chain is Steroidogenic factor 1 (NR5A1) from Equus caballus (Horse).